The sequence spans 301 residues: Transcriptional activator protein NhaR (301 aa).

The HTH lysR-type domain maps to 6 to 63 (INYNHLYYFWHVYKEGSVVGAAEALYLTPQTITGQIRALEERLQGKLFKRKGRGLEPS). A DNA-binding region (H-T-H motif) is located at residues 23–42 (VVGAAEALYLTPQTITGQIR).

The protein belongs to the LysR transcriptional regulatory family.

The protein localises to the cytoplasm. Plays a role in the positive regulation of NhaA. This Escherichia coli (strain K12) protein is Transcriptional activator protein NhaR (nhaR).